Reading from the N-terminus, the 104-residue chain is Large ribosomal subunit protein uL24 (104 aa).

Belongs to the universal ribosomal protein uL24 family. In terms of assembly, part of the 50S ribosomal subunit.

In terms of biological role, one of two assembly initiator proteins, it binds directly to the 5'-end of the 23S rRNA, where it nucleates assembly of the 50S subunit. One of the proteins that surrounds the polypeptide exit tunnel on the outside of the subunit. This chain is Large ribosomal subunit protein uL24, found in Aliivibrio fischeri (strain ATCC 700601 / ES114) (Vibrio fischeri).